The primary structure comprises 744 residues: Translation initiation factor IF-2, chloroplastic (744 aa).

Positions 113–146 (NSEGSFKSGKQKKKEKGKHKQNVNKDIHHTKNNR) are disordered. Basic residues predominate over residues 121-134 (GKQKKKEKGKHKQN). The 174-residue stretch at 244-417 (NRAPIVTILG…CSLAEFINLK (174 aa)) folds into the tr-type G domain. The segment at 253 to 260 (GHVDHGKT) is G1. 253–260 (GHVDHGKT) contacts GTP. The interval 278-282 (GITQS) is G2. The G3 stretch occupies residues 303–306 (DTPG). Residues 303-307 (DTPGH) and 357-360 (NKID) contribute to the GTP site. Residues 357–360 (NKID) are G4. The interval 393–395 (SAL) is G5.

The protein belongs to the TRAFAC class translation factor GTPase superfamily. Classic translation factor GTPase family. IF-2 subfamily.

Its subcellular location is the plastid. The protein resides in the chloroplast. Functionally, one of the essential components for the initiation of protein synthesis. Protects formylmethionyl-tRNA from spontaneous hydrolysis and promotes its binding to the 30S ribosomal subunits. Also involved in the hydrolysis of GTP during the formation of the 70S ribosomal complex. The chain is Translation initiation factor IF-2, chloroplastic (infB) from Gracilaria tenuistipitata var. liui (Red alga).